The chain runs to 359 residues: 3-dehydroquinate synthase (359 aa).

NAD(+) contacts are provided by residues aspartate 71–lysine 76, glycine 105–aspartate 109, threonine 129–threonine 130, lysine 142, lysine 151, and cysteine 169–threonine 172. The Zn(2+) site is built by glutamate 184, histidine 247, and histidine 264.

It belongs to the sugar phosphate cyclases superfamily. Dehydroquinate synthase family. It depends on Co(2+) as a cofactor. Zn(2+) serves as cofactor. Requires NAD(+) as cofactor.

It localises to the cytoplasm. The catalysed reaction is 7-phospho-2-dehydro-3-deoxy-D-arabino-heptonate = 3-dehydroquinate + phosphate. The protein operates within metabolic intermediate biosynthesis; chorismate biosynthesis; chorismate from D-erythrose 4-phosphate and phosphoenolpyruvate: step 2/7. In terms of biological role, catalyzes the conversion of 3-deoxy-D-arabino-heptulosonate 7-phosphate (DAHP) to dehydroquinate (DHQ). This is 3-dehydroquinate synthase from Baumannia cicadellinicola subsp. Homalodisca coagulata.